The sequence spans 832 residues: Prickle-like protein 1 (832 aa).

The region spanning 14 to 122 is the PET domain; it reads FGCQRSSTSD…TIKLLSRAVM (109 aa). 3 LIM zinc-binding domains span residues 124–188, 189–249, and 250–313; these read AVCE…ELLK, PRCS…LYAE, and YCET…EDIH. Positions 314 to 342 are disordered; the sequence is ASDSSDSAFQSARSRDSRRSVRMGRSSRS. Residues Ser315, Ser592, and Ser595 each carry the phosphoserine modification. 2 disordered regions span residues 663 to 688 and 765 to 832; these read HFEE…DNAL and SSST…CIIS. Positions 670–681 are enriched in basic residues; that stretch reads RPHHHRHRRSRK. A Phosphoserine modification is found at Ser684. The segment covering 798 to 815 has biased composition (polar residues); the sequence is DLSSPASALPTPQFTQRT. The segment covering 816–832 has biased composition (basic residues); the sequence is TKSKKKKGHKGKNCIIS. At Cys829 the chain carries Cysteine methyl ester. Cys829 is lipidated: S-farnesyl cysteine. Residues 830–832 constitute a propeptide, removed in mature form; that stretch reads IIS.

Belongs to the prickle / espinas / testin family. Interacts with REST.

It is found in the nucleus membrane. Its subcellular location is the cytoplasm. The protein localises to the cytosol. In terms of biological role, involved in the planar cell polarity pathway that controls convergent extension during gastrulation and neural tube closure. Convergent extension is a complex morphogenetic process during which cells elongate, move mediolaterally, and intercalate between neighboring cells, leading to convergence toward the mediolateral axis and extension along the anteroposterior axis. Necessary for nuclear localization of REST. May serve as nuclear receptor. The chain is Prickle-like protein 1 (Prickle1) from Mus musculus (Mouse).